A 255-amino-acid polypeptide reads, in one-letter code: tRNA (guanine-N(1)-)-methyltransferase (255 aa).

S-adenosyl-L-methionine is bound by residues glycine 117 and 137-142 (LGDFVL).

Belongs to the RNA methyltransferase TrmD family. As to quaternary structure, homodimer.

It localises to the cytoplasm. The enzyme catalyses guanosine(37) in tRNA + S-adenosyl-L-methionine = N(1)-methylguanosine(37) in tRNA + S-adenosyl-L-homocysteine + H(+). In terms of biological role, specifically methylates guanosine-37 in various tRNAs. The polypeptide is tRNA (guanine-N(1)-)-methyltransferase (Paraburkholderia phymatum (strain DSM 17167 / CIP 108236 / LMG 21445 / STM815) (Burkholderia phymatum)).